The primary structure comprises 223 residues: Ubiquitin carboxyl-terminal hydrolase isozyme L1 (223 aa).

At M1 the chain carries N-acetylmethionine. A UCH catalytic domain is found at 2–221; it reads QLKPMEINPE…VRFSAVALCK (220 aa). Positions 5–10 are interaction with ubiquitin; sequence PMEINP. C90 (nucleophile) is an active-site residue. A Phosphoserine modification is found at S125. H161 functions as the Proton donor in the catalytic mechanism. An interaction with ubiquitin region spans residues 211 to 216; it reads EVRFSA. C220 carries S-farnesyl cysteine lipidation. The propeptide at 221 to 223 is removed in mature form; sequence KAA.

It belongs to the peptidase C12 family. In terms of assembly, monomer. Homodimer. Interacts with SNCA. Interacts with COPS5. O-glycosylated. As to expression, found in neuronal cell bodies and processes throughout the neocortex (at protein level). Expressed in neurons and cells of the diffuse neuroendocrine system and their tumors. Weakly expressed in ovary. Down-regulated in brains from Parkinson disease and Alzheimer disease patients.

The protein resides in the cytoplasm. It localises to the endoplasmic reticulum membrane. The catalysed reaction is Thiol-dependent hydrolysis of ester, thioester, amide, peptide and isopeptide bonds formed by the C-terminal Gly of ubiquitin (a 76-residue protein attached to proteins as an intracellular targeting signal).. Functionally, deubiquitinase that plays a role in the regulation of several processes such as maintenance of synaptic function, cardiac function, inflammatory response or osteoclastogenesis. Abrogates the ubiquitination of multiple proteins including WWTR1/TAZ, EGFR, HIF1A and beta-site amyloid precursor protein cleaving enzyme 1/BACE1. In addition, recognizes and hydrolyzes a peptide bond at the C-terminal glycine of ubiquitin to maintain a stable pool of monoubiquitin that is a key requirement for the ubiquitin-proteasome and the autophagy-lysosome pathways. Regulates amyloid precursor protein/APP processing by promoting BACE1 degradation resulting in decreased amyloid beta production. Plays a role in the immune response by regulating the ability of MHC I molecules to reach cross-presentation compartments competent for generating Ag-MHC I complexes. Mediates the 'Lys-48'-linked deubiquitination of the transcriptional coactivator WWTR1/TAZ leading to its stabilization and inhibition of osteoclastogenesis. Deubiquitinates and stabilizes epidermal growth factor receptor EGFR to prevent its degradation and to activate its downstream mediators. Modulates oxidative activity in skeletal muscle by regulating key mitochondrial oxidative proteins. Enhances the activity of hypoxia-inducible factor 1-alpha/HIF1A by abrogateing its VHL E3 ligase-mediated ubiquitination and consequently inhibiting its degradation. The chain is Ubiquitin carboxyl-terminal hydrolase isozyme L1 (UCHL1) from Homo sapiens (Human).